Consider the following 402-residue polypeptide: Multidrug resistance protein MdtG (402 aa).

11 consecutive transmembrane segments (helical) span residues 14–34 (LYIVWFGCFLTGAGFSLIMPF), 52–72 (LWTGVAFSITFLFSAIAAPFW), 90–110 (LGMAIVMVLIGFAQNIWQLLI), 113–133 (ALLGVLGGFVPNANALIATQV), 149–169 (AVSGALIGPLIGGILADLYGL), 171–191 (PVFFITAAVLFICFIVTLFFV), 219–239 (VICLFFTTMIIQVATGSVTPI), 254–274 (LAFISGVIASVPGIAALISAP), 288–308 (VLIFTLGLSIFMLIPMALVSN), 318–338 (LLGAVNAAMLPAVQTLILYNI), and 376–396 (AVFYFTAAVVFFNLIYSWISF).

It belongs to the major facilitator superfamily. DHA1 family. MdtG (TC 2.A.1.2.20) subfamily.

It localises to the cell inner membrane. The polypeptide is Multidrug resistance protein MdtG (Proteus mirabilis (strain HI4320)).